Here is a 94-residue protein sequence, read N- to C-terminus: Large ribosomal subunit protein bL25 (94 aa).

The protein belongs to the bacterial ribosomal protein bL25 family. In terms of assembly, part of the 50S ribosomal subunit; part of the 5S rRNA/L5/L18/L25 subcomplex. Contacts the 5S rRNA. Binds to the 5S rRNA independently of L5 and L18.

This is one of the proteins that binds to the 5S RNA in the ribosome where it forms part of the central protuberance. The polypeptide is Large ribosomal subunit protein bL25 (Citrobacter koseri (strain ATCC BAA-895 / CDC 4225-83 / SGSC4696)).